The chain runs to 195 residues: Putative deoxynucleoside kinase (195 aa).

The protein is Putative deoxynucleoside kinase of Frog virus 3 (isolate Goorha) (FV-3).